The sequence spans 156 residues: Small ribosomal subunit protein uS7 (156 aa).

Belongs to the universal ribosomal protein uS7 family. As to quaternary structure, part of the 30S ribosomal subunit. Contacts proteins S9 and S11.

In terms of biological role, one of the primary rRNA binding proteins, it binds directly to 16S rRNA where it nucleates assembly of the head domain of the 30S subunit. Is located at the subunit interface close to the decoding center, probably blocks exit of the E-site tRNA. In Erythrobacter litoralis (strain HTCC2594), this protein is Small ribosomal subunit protein uS7.